The sequence spans 99 residues: Mu-hexatoxin-Mg1c (99 aa).

Disulfide bonds link Cys-61/Cys-75, Cys-68/Cys-80, and Cys-74/Cys-94.

Belongs to the neurotoxin 14 (magi-1) family. 09 (magi-1) subfamily. Expressed by the venom gland.

It localises to the secreted. In terms of biological role, inhibits voltage-gated sodium channels by binding to site 3. Insecticidal neurotoxin. The protein is Mu-hexatoxin-Mg1c of Macrothele gigas (Japanese funnel web spider).